Here is a 327-residue protein sequence, read N- to C-terminus: Prenyl transferase janC (327 aa).

A helical transmembrane segment spans residues F3–F23. Residues K63 and H96 each coordinate isopentenyl diphosphate. 2 residues coordinate Mg(2+): D103 and D107. Dimethylallyl diphosphate-binding residues include R112 and K196. N211 carries an N-linked (GlcNAc...) asparagine glycan.

This sequence belongs to the FPP/GGPP synthase family.

The protein resides in the membrane. It participates in secondary metabolite biosynthesis. Its function is as follows. Prenyl transferase; part of the gene cluster that mediates the biosynthesis of the indole diterpenes janthitremanes such as shearinine K or shearinine A. The geranylgeranyl diphosphate (GGPP) synthase janG catalyzes the first step in janthitremane biosynthesis via conversion of farnesyl pyrophosphate and isopentyl pyrophosphate into geranylgeranyl pyrophosphate (GGPP). Condensation of indole-3-glycerol phosphate with GGPP by the prenyl transferase janC then forms 3-geranylgeranylindole (3-GGI). Epoxidation by the FAD-dependent monooxygenase janM leads to a epoxidized-GGI that is substrate of the terpene cyclase janB for cyclization to yield paspaline. Paspaline is subsequently converted to 13-desoxypaspaline by the cytochrome P450 monooxygenase janP, via beta-PC-M6 in a series of alpha-face oxidations. The cytochrome P450 monooxygenase janQ is proposed to carry out sequential beta-face oxidation steps at C-7 and C-13 of 13-desoxypaspaline to form paspalicine and paspalinine respectively. The indole diterpene prenyltransferase janD may then convert paspalinine into shearinine K which is substrate of janO and/or additional enzymes for oxidation and cyclization to generate shearinine A. The polypeptide is Prenyl transferase janC (Penicillium janthinellum (Penicillium vitale)).